The primary structure comprises 178 residues: Large ribosomal subunit protein uL10 (178 aa).

It belongs to the universal ribosomal protein uL10 family. In terms of assembly, part of the ribosomal stalk of the 50S ribosomal subunit. The N-terminus interacts with L11 and the large rRNA to form the base of the stalk. The C-terminus forms an elongated spine to which L12 dimers bind in a sequential fashion forming a multimeric L10(L12)X complex.

Functionally, forms part of the ribosomal stalk, playing a central role in the interaction of the ribosome with GTP-bound translation factors. This is Large ribosomal subunit protein uL10 from Stenotrophomonas maltophilia (strain R551-3).